Here is a 183-residue protein sequence, read N- to C-terminus: Protein P7 (183 aa).

The protein resides in the host nucleus. May play a role in inhibition of the host immune system by counteracting the type I interferon response. This is Protein P7 from Gadus morhua (Atlantic cod).